Here is a 517-residue protein sequence, read N- to C-terminus: MGAIDLSFSQSLLFSSSRSNLSSSTHRSVSFLPPGSKSRCLPPLRSMSHDDDTASKEVKLWGGRFEESVTEKVEKFTESISFDKVLYKQDIMGSKAHASMLAHQGLITDSDKDSILRGLDDIERQIEANKFEWRTDREDVHMNIEAALTDLIGEPAKKLHTARSRNDQVATDFRLWCRDAIDTIIVKIRNLQRALVELALKNEALIVPGYTHLQRAQPVLLPHVLLTFVEQLERDAGRYVDCRARLNFSPLGACALAGTGLPIDRFMTANALGFTEPMRNSIDAVSDRDFVLEFLYTNANTGIHLSRLGEEWVLWASEEFGFMTPSDSVSTGSSIMPQKKNPDPMELVRGKSARVIGDLVTVLTLCKGLPLAYNRDFQEDKEPMFDSTKTIMGMIDVSAEFAQNVTFNEDRIKKSLPAGHLDATTLADYLVKKGMPFRSSHDIVGKLVGVCVSKGCELQNLSLEEMKKLSPVFEEDVFGFLGVENSVNKFSSYGSTGSNCVAEQLGYWVNKLNITST.

A chloroplast-targeting transit peptide spans 1–45 (MGAIDLSFSQSLLFSSSRSNLSSSTHRSVSFLPPGSKSRCLPPLR). Positions 79, 166, and 211 each coordinate 2-(N(omega)-L-arginino)succinate. The active-site Proton acceptor is the H212. The active-site Proton donor is the S333. 4 residues coordinate 2-(N(omega)-L-arginino)succinate: N341, Y373, Q378, and K381.

It belongs to the lyase 1 family. Argininosuccinate lyase subfamily.

It localises to the plastid. The protein resides in the chloroplast. It carries out the reaction 2-(N(omega)-L-arginino)succinate = fumarate + L-arginine. The protein operates within amino-acid biosynthesis; L-arginine biosynthesis; L-arginine from L-ornithine and carbamoyl phosphate: step 3/3. This chain is Argininosuccinate lyase, chloroplastic, found in Arabidopsis thaliana (Mouse-ear cress).